Here is a 443-residue protein sequence, read N- to C-terminus: Glutamyl-tRNA reductase (443 aa).

Substrate-binding positions include 49 to 52, Ser-109, 114 to 116, and Gln-120; these read TCNR and ETQ. The active-site Nucleophile is the Cys-50. 189–194 lines the NADP(+) pocket; sequence GAGKMS.

Belongs to the glutamyl-tRNA reductase family. As to quaternary structure, homodimer.

The catalysed reaction is (S)-4-amino-5-oxopentanoate + tRNA(Glu) + NADP(+) = L-glutamyl-tRNA(Glu) + NADPH + H(+). It functions in the pathway porphyrin-containing compound metabolism; protoporphyrin-IX biosynthesis; 5-aminolevulinate from L-glutamyl-tRNA(Glu): step 1/2. Catalyzes the NADPH-dependent reduction of glutamyl-tRNA(Glu) to glutamate 1-semialdehyde (GSA). The protein is Glutamyl-tRNA reductase of Heliobacterium mobile (Heliobacillus mobilis).